We begin with the raw amino-acid sequence, 746 residues long: Polyribonucleotide nucleotidyltransferase (746 aa).

Mg(2+)-binding residues include aspartate 493 and aspartate 499. The KH domain occupies 560–619; the sequence is PRIITLQINPEKIGALIGPGGKTIRSITEATGAQIDIEEDGRVYISTADAAAAQQAVAMV. The S1 motif domain occupies 629–698; it reads GDIFLGKVVR…GTGKVSLSRR (70 aa). Residues 704–746 form a disordered region; sequence ETAEDRRAAGAGRGLRDGGRSSGSERSGDRSPRSDDRPRPRRR. Composition is skewed to basic and acidic residues over residues 706-722 and 729-746; these read AEDR…RDGG and RSGD…PRRR.

This sequence belongs to the polyribonucleotide nucleotidyltransferase family. The cofactor is Mg(2+).

The protein localises to the cytoplasm. The enzyme catalyses RNA(n+1) + phosphate = RNA(n) + a ribonucleoside 5'-diphosphate. Functionally, involved in mRNA degradation. Catalyzes the phosphorolysis of single-stranded polyribonucleotides processively in the 3'- to 5'-direction. The sequence is that of Polyribonucleotide nucleotidyltransferase from Roseiflexus castenholzii (strain DSM 13941 / HLO8).